The following is a 208-amino-acid chain: Phosphoheptose isomerase (208 aa).

Residues 38–200 (MALTLARGRK…LFENVLALQP (163 aa)) enclose the SIS domain. 53–55 (NGG) is a substrate binding site. Zn(2+) is bound by residues H62 and E66. Residues E66, 95–96 (ND), 121–123 (STS), S126, and Q173 contribute to the substrate site. Residues Q173 and H181 each contribute to the Zn(2+) site.

Belongs to the SIS family. GmhA subfamily. In terms of assembly, homotetramer. Requires Zn(2+) as cofactor.

The protein localises to the cytoplasm. It catalyses the reaction 2 D-sedoheptulose 7-phosphate = D-glycero-alpha-D-manno-heptose 7-phosphate + D-glycero-beta-D-manno-heptose 7-phosphate. Its pathway is carbohydrate biosynthesis; D-glycero-D-manno-heptose 7-phosphate biosynthesis; D-glycero-alpha-D-manno-heptose 7-phosphate and D-glycero-beta-D-manno-heptose 7-phosphate from sedoheptulose 7-phosphate: step 1/1. Catalyzes the isomerization of sedoheptulose 7-phosphate in D-glycero-D-manno-heptose 7-phosphate. The polypeptide is Phosphoheptose isomerase (Nitratidesulfovibrio vulgaris (strain DSM 19637 / Miyazaki F) (Desulfovibrio vulgaris)).